Reading from the N-terminus, the 184-residue chain is MQARDPHANVFFVGLMGAGKTTVGRAVARRLDRTFFDSDHEIEARTGARIPVIFEMEGEAGFRDRETQVITDLTQRENIVLATGGGAVLRPENRDCLKNNGIVVYLRANPHDLWLRTRKDKNRPLLQTEDPKGRLEALYEVRDPLYRECADFVIETGRPSVNGLVNMVLMQLELAGVIAKPLQA.

17 to 22 (GAGKTT) is an ATP binding site. Mg(2+) is bound at residue threonine 21. Positions 39, 63, and 85 each coordinate substrate. Arginine 123 is a binding site for ATP. Arginine 142 provides a ligand contact to substrate.

The protein belongs to the shikimate kinase family. In terms of assembly, monomer. It depends on Mg(2+) as a cofactor.

It is found in the cytoplasm. The enzyme catalyses shikimate + ATP = 3-phosphoshikimate + ADP + H(+). It functions in the pathway metabolic intermediate biosynthesis; chorismate biosynthesis; chorismate from D-erythrose 4-phosphate and phosphoenolpyruvate: step 5/7. Catalyzes the specific phosphorylation of the 3-hydroxyl group of shikimic acid using ATP as a cosubstrate. The polypeptide is Shikimate kinase (Burkholderia lata (strain ATCC 17760 / DSM 23089 / LMG 22485 / NCIMB 9086 / R18194 / 383)).